A 455-amino-acid chain; its full sequence is Putative FBD-associated F-box protein At5g56400 (455 aa).

Residues 32-81 (VDKISDLPEDLLVHILSLLPTTNDIVATSGVSKRWESLWTKVHKLRFNDR) form the F-box domain. The FBD domain occupies 372–421 (WNQQPSYVPECLTKSLEIFEWRNYKATFRERDVAVYILKNSTCLKKTVIS).

The sequence is that of Putative FBD-associated F-box protein At5g56400 from Arabidopsis thaliana (Mouse-ear cress).